Consider the following 147-residue polypeptide: Angiogenin (147 aa).

The first 24 residues, 1–24 (MVMGLGVLLLVFVLGLGLTPPTLA), serve as a signal peptide directing secretion. Pyrrolidone carboxylic acid is present on Gln-25. Residue His-37 is the Proton acceptor of the active site. 2 residues coordinate tRNA: Arg-45 and Asp-46. 3 disulfide bridges follow: Cys-50–Cys-105, Cys-63–Cys-116, and Cys-81–Cys-131. Residues 55 to 59 (RRRGL) carry the Nucleolar localization signal motif. The tRNA site is built by Cys-105 and Val-127. The active-site Proton donor is the His-138.

Belongs to the pancreatic ribonuclease family. In terms of assembly, homodimer. Interacts with RNH1; inhibiting ANG ribonuclease activity. Interacts with PCNA.

The protein localises to the secreted. Its subcellular location is the nucleus. The protein resides in the nucleolus. It is found in the cytoplasm. It localises to the stress granule. With respect to regulation, has weak tRNA ribonuclease activity by itself due to partial autoinhibition by its C-terminus, which folds into a short alpha-helix that partially occludes the substrate-binding site. In absence of stress, the ribonuclease activity is inhibited by RNH1 in the cytoplasm. In response to stress, dissociates from RNH1 in the cytoplasm and associates with cytoplasmic ribosomes with vacant A-sites: ribosomes directly activate the tRNA ribonuclease activity of ANG by refolding the C-terminal alpha-helix. In response to stress, the angiogenic activity of ANG is inhibited by RNH1 in the nucleus. Functionally, secreted ribonuclease that can either promote or restrict cell proliferation of target cells, depending on the context. Endocytosed in target cells via its receptor PLXNB2 and translocates to the cytoplasm or nucleus. Under stress conditions, localizes to the cytoplasm and promotes the assembly of stress granules (SGs): specifically cleaves a subset of tRNAs within anticodon loops to produce tRNA-derived stress-induced fragments (tiRNAs), resulting in translation repression and inhibition of cell proliferation. tiRNas also prevent formation of apoptosome, thereby promoting cell survival. Preferentially cleaves RNAs between a pyrimidine and an adenosine residue, suggesting that it cleaves the anticodon loop of tRNA(Ala) (32-UUAGCAU-38) after positions 33 and 36. Cleaves a subset of tRNAs, including tRNA(Ala), tRNA(Glu), tRNA(Gly), tRNA(Lys), tRNA(Val), tRNA(His), tRNA(Asp) and tRNA(Sec). Under growth conditions and in differentiated cells, translocates to the nucleus and stimulates ribosomal RNA (rRNA) transcription, including that containing the initiation site sequences of 45S rRNA, thereby promoting cell growth and proliferation. Angiogenin induces vascularization of normal and malignant tissues via its ability to promote rRNA transcription. Involved in hematopoietic stem and progenitor cell (HSPC) growth and survival by promoting rRNA transcription in growth conditions and inhibiting translation in response to stress, respectively. Mediates the crosstalk between myeloid and intestinal epithelial cells to protect the intestinal epithelial barrier integrity: secreted by myeloid cells and promotes intestinal epithelial cells proliferation and survival. Also mediates osteoclast-endothelial cell crosstalk in growing bone: produced by osteoclasts and protects the neighboring vascular cells against senescence by promoting rRNA transcription. This chain is Angiogenin (ANG), found in Gorilla gorilla gorilla (Western lowland gorilla).